We begin with the raw amino-acid sequence, 339 residues long: Anthranilate phosphoribosyltransferase (339 aa).

Residues G81, G84–D85, S89, N91–S94, K109–S117, and A121 contribute to the 5-phospho-alpha-D-ribose 1-diphosphate site. G81 is an anthranilate binding site. A Mg(2+)-binding site is contributed by S93. N112 provides a ligand contact to anthranilate. R167 serves as a coordination point for anthranilate. D225 and E226 together coordinate Mg(2+).

Belongs to the anthranilate phosphoribosyltransferase family. In terms of assembly, homodimer. Mg(2+) is required as a cofactor.

It catalyses the reaction N-(5-phospho-beta-D-ribosyl)anthranilate + diphosphate = 5-phospho-alpha-D-ribose 1-diphosphate + anthranilate. Its pathway is amino-acid biosynthesis; L-tryptophan biosynthesis; L-tryptophan from chorismate: step 2/5. In terms of biological role, catalyzes the transfer of the phosphoribosyl group of 5-phosphorylribose-1-pyrophosphate (PRPP) to anthranilate to yield N-(5'-phosphoribosyl)-anthranilate (PRA). This is Anthranilate phosphoribosyltransferase from Brucella canis (strain ATCC 23365 / NCTC 10854 / RM-666).